We begin with the raw amino-acid sequence, 336 residues long: Phospho-N-acetylmuramoyl-pentapeptide-transferase (336 aa).

10 helical membrane passes run 3 to 23, 53 to 73, 78 to 98, 118 to 138, 143 to 163, 174 to 194, 200 to 220, 226 to 246, 251 to 271, and 316 to 336; these read LTLI…PYFI, GGTV…LFSI, SLAL…IGFL, LALQ…PSGI, VFGY…FWVV, GIDG…GVIA, FDVL…FCFN, VFMG…ISIA, WTLL…MLQV, and AFLW…LYVF.

It belongs to the glycosyltransferase 4 family. MraY subfamily. Requires Mg(2+) as cofactor.

The protein localises to the cell membrane. The catalysed reaction is UDP-N-acetyl-alpha-D-muramoyl-L-alanyl-gamma-D-glutamyl-L-lysyl-D-alanyl-D-alanine + di-trans,octa-cis-undecaprenyl phosphate = Mur2Ac(oyl-L-Ala-gamma-D-Glu-L-Lys-D-Ala-D-Ala)-di-trans,octa-cis-undecaprenyl diphosphate + UMP. It participates in cell wall biogenesis; peptidoglycan biosynthesis. Its function is as follows. Catalyzes the initial step of the lipid cycle reactions in the biosynthesis of the cell wall peptidoglycan: transfers peptidoglycan precursor phospho-MurNAc-pentapeptide from UDP-MurNAc-pentapeptide onto the lipid carrier undecaprenyl phosphate, yielding undecaprenyl-pyrophosphoryl-MurNAc-pentapeptide, known as lipid I. The sequence is that of Phospho-N-acetylmuramoyl-pentapeptide-transferase from Streptococcus pyogenes serotype M3 (strain ATCC BAA-595 / MGAS315).